The chain runs to 49 residues: Large ribosomal subunit protein eL40 (49 aa).

Belongs to the eukaryotic ribosomal protein eL40 family.

The protein is Large ribosomal subunit protein eL40 of Natronomonas pharaonis (strain ATCC 35678 / DSM 2160 / CIP 103997 / JCM 8858 / NBRC 14720 / NCIMB 2260 / Gabara) (Halobacterium pharaonis).